Here is a 504-residue protein sequence, read N- to C-terminus: Hexokinase-10 (504 aa).

Residues 7 to 29 (GWVRVAAVGWAVAACAVAAGMVA) form a helical membrane-spanning segment. Positions 39-493 (NRAVAVVRDL…SGTGAALLAA (455 aa)) constitute a Hexokinase domain. Residues 94-226 (DGSEEGISYA…GLNMKVNVLV (133 aa)) form a hexokinase small subdomain region. ADP is bound by residues Gly108 and Thr109. Residues Thr192, Lys193, Asn227, Asn254, Glu282, and Glu313 each coordinate D-glucose. A hexokinase large subdomain region spans residues 227–482 (NNTVGTLALG…ATVSLRVMEE (256 aa)). An ADP-binding site is contributed by Gly447.

Belongs to the hexokinase family. As to expression, expressed specifically in stamen.

Its subcellular location is the plastid. The protein resides in the chloroplast outer membrane. It catalyses the reaction a D-hexose + ATP = a D-hexose 6-phosphate + ADP + H(+). The enzyme catalyses D-fructose + ATP = D-fructose 6-phosphate + ADP + H(+). It carries out the reaction D-glucose + ATP = D-glucose 6-phosphate + ADP + H(+). The protein operates within carbohydrate metabolism; hexose metabolism. It participates in carbohydrate degradation; glycolysis; D-glyceraldehyde 3-phosphate and glycerone phosphate from D-glucose: step 1/4. Fructose and glucose phosphorylating enzyme. This Oryza sativa subsp. japonica (Rice) protein is Hexokinase-10 (HXK10).